A 170-amino-acid chain; its full sequence is Single-stranded DNA-binding protein (170 aa).

An oligomerization region spans residues 1–26; it reads MSNELKQVEQTEEAVVVSETKDYIKV.

This sequence belongs to the phi29likevirus single-strand-binding protein family. In terms of assembly, hexamer.

In terms of biological role, single-stranded DNA-binding protein required for the elongation during viral DNA replication by strand displacement. Displaced viral DNA strands are transiently coated with the ssDNA-binding protein and therefore protected againt nucleases. The latter is then probably removed by the replisome that performs lagging strand synthesis or during the events that lead up to the recombination process. Has helix-destabilizing activity since it removes secondary structure from the ssDNA in replicative intermediates. The polypeptide is Single-stranded DNA-binding protein (Bacillus subtilis (Bacteriophage GA-1)).